A 143-amino-acid polypeptide reads, in one-letter code: Spore coat protein P (143 aa).

Residues 34 to 143 (FFDSEASTFV…VETVAFNKGL (110 aa)) enclose the sHSP domain.

The protein belongs to the small heat shock protein (HSP20) family.

The protein is Spore coat protein P (cotP) of Bacillus subtilis (strain 168).